Reading from the N-terminus, the 394-residue chain is Lipoyl synthase, chloroplastic (394 aa).

The N-terminal 36 residues, 1-36 (MMHHCSITKPTFSISISTQKLHHHSSKFLNLGFRIR), are a transit peptide targeting the chloroplast. Cys-127, Cys-132, Cys-138, Cys-158, Cys-162, Cys-165, and Ser-373 together coordinate [4Fe-4S] cluster. Residues 141-362 (GGGDGVATAT…KTYGESIGFR (222 aa)) form the Radical SAM core domain.

This sequence belongs to the radical SAM superfamily. Lipoyl synthase family. It depends on [4Fe-4S] cluster as a cofactor. Expressed in roots, leaves and flowers.

The protein localises to the plastid. Its subcellular location is the chloroplast. The catalysed reaction is [[Fe-S] cluster scaffold protein carrying a second [4Fe-4S](2+) cluster] + N(6)-octanoyl-L-lysyl-[protein] + 2 oxidized [2Fe-2S]-[ferredoxin] + 2 S-adenosyl-L-methionine + 4 H(+) = [[Fe-S] cluster scaffold protein] + N(6)-[(R)-dihydrolipoyl]-L-lysyl-[protein] + 4 Fe(3+) + 2 hydrogen sulfide + 2 5'-deoxyadenosine + 2 L-methionine + 2 reduced [2Fe-2S]-[ferredoxin]. Its pathway is protein modification; protein lipoylation via endogenous pathway; protein N(6)-(lipoyl)lysine from octanoyl-[acyl-carrier-protein]: step 2/2. Functionally, catalyzes the radical-mediated insertion of two sulfur atoms into the C-6 and C-8 positions of the octanoyl moiety bound to the lipoyl domains of lipoate-dependent enzymes, thereby converting the octanoylated domains into lipoylated derivatives. Together with LIP2P and LIP2P2 is essential for de novo plastidial protein lipoylation during seed development. This chain is Lipoyl synthase, chloroplastic, found in Arabidopsis thaliana (Mouse-ear cress).